The primary structure comprises 1275 residues: O-antigen biosynthesis protein RfbC (1275 aa).

Involved in O-antigen biosynthesis. This chain is O-antigen biosynthesis protein RfbC (rfbC), found in Myxococcus xanthus.